The following is a 1578-amino-acid chain: Formin-2 (1578 aa).

Basic and acidic residues-rich tracts occupy residues Met1–His17, Ala26–Lys35, and Thr57–Ser66. A disordered region spans residues Met1 to Asn73. Ser89 is modified (phosphoserine). 3 disordered regions span residues Lys208–Ala230, Glu244–Arg383, and Arg401–Arg458. Polar residues-rich tracts occupy residues Ser273–Thr282 and Ser290–Ala300. A compositionally biased stretch (acidic residues) spans Asp322–Glu333. Residues Ala351–Arg364 show a composition bias toward basic and acidic residues. Low complexity-rich tracts occupy residues Ser404–Pro418 and Ser427–Pro442. Ser459, Ser489, and Ser493 each carry phosphoserine. The tract at residues Ser587–Ser634 is disordered. Positions Leu608–Pro622 are enriched in basic and acidic residues. Positions Asp643–Arg683 form a coiled coil. Disordered stretches follow at residues Arg714–Gln765, Asp786–Cys836, and Pro880–Ser944. The region spanning Pro735–Pro1124 is the FH1 domain. Polar residues predominate over residues Asp786–Gln795. Positions Leu803–His817 are enriched in low complexity. Over residues Thr818–Ser827 the composition is skewed to basic and acidic residues. Over residues Leu893 to Ser944 the composition is skewed to pro residues. A run of 12 repeats spans residues Met919 to Gly929, Met930 to Gly940, Met941 to Gly951, Met952 to Gly962, Val963 to Gly973, Val974 to Gly984, Val985 to Gly995, Val996 to Gly1006, Val1007 to Gly1017, Val1018 to Gly1028, Val1029 to Gly1039, and Val1040 to Gly1050. The tract at residues Met919–Gly1039 is 12 X 11 AA tandem repeats of [MV]-G-I-P-P-P-P-P-L-P-G. A compositionally biased stretch (pro residues) spans Leu1037–Gly1097. The interval Leu1037–Thr1108 is disordered. An FH2 domain is found at Arg1139–Lys1554. Residues Gln1419–Gln1455 adopt a coiled-coil conformation. The tract at residues Lys1571 to Thr1578 is important for interaction with SPIRE1.

Belongs to the formin homology family. Cappuccino subfamily. As to quaternary structure, interacts with SPIRE1. Binds actin. Interacts with CDKN1A. In terms of tissue distribution, detected in brain and in oocytes (at protein level). Expressed almost exclusively in the developing and mature central nervous system. Detected in oocytes.

The protein localises to the cytoplasm. The protein resides in the cytoskeleton. It localises to the cytosol. Its subcellular location is the perinuclear region. It is found in the nucleus. The protein localises to the nucleolus. The protein resides in the cell membrane. It localises to the cell cortex. Its subcellular location is the cytoplasmic vesicle membrane. In terms of biological role, actin-binding protein that is involved in actin cytoskeleton assembly and reorganization. Acts as an actin nucleation factor and promotes assembly of actin filaments together with SPIRE1 and SPIRE2. Involved in intracellular vesicle transport along actin fibers, providing a novel link between actin cytoskeleton dynamics and intracellular transport. Required for asymmetric spindle positioning, asymmetric oocyte division and polar body extrusion during female germ cell meiosis. Plays a role in responses to DNA damage, cellular stress and hypoxia by protecting CDKN1A against degradation, and thereby plays a role in stress-induced cell cycle arrest. Also acts in the nucleus: together with SPIRE1 and SPIRE2, promotes assembly of nuclear actin filaments in response to DNA damage in order to facilitate movement of chromatin and repair factors after DNA damage. Protects cells against apoptosis by protecting CDKN1A against degradation. This Mus musculus (Mouse) protein is Formin-2 (Fmn2).